The sequence spans 287 residues: Ciliary microtubule inner protein 6 (287 aa).

2 stretches are compositionally biased toward basic and acidic residues: residues 1-15 and 25-34; these read MEEK…KIED and EEIKHEEKPG. The interval 1-42 is disordered; that stretch reads MEEKEDKHQQHKIEDAAITYVSENEEIKHEEKPGKSIHHSKS. The mn 1 stretch occupies residues 128–160; that stretch reads GIVPLASPGTSAELQNNFIEYISFIHQYDARKT. The tract at residues 179-287 is disordered; the sequence is KPGSRPTVPK…PLNPPIKKSE (109 aa). Composition is skewed to basic and acidic residues over residues 203-212 and 232-245; these read EQSKKTEKGN and LEPK…DVRQ. Residues 213-246 form a mn 2 region; sequence SAESRMISPGLCQQNSQELLEPKTHLSETDVRQA.

Its subcellular location is the cell projection. It localises to the cilium. The sequence is that of Ciliary microtubule inner protein 6 from Homo sapiens (Human).